A 273-amino-acid polypeptide reads, in one-letter code: Dermonecrotic toxin LapSicTox-alphaIB1c (273 aa).

Histidine 5 is a catalytic residue. 2 residues coordinate Mg(2+): glutamate 25 and aspartate 27. Histidine 41 serves as the catalytic Nucleophile. Disulfide bonds link cysteine 45–cysteine 51 and cysteine 47–cysteine 190. Aspartate 85 contributes to the Mg(2+) binding site. Asparagine 250 carries N-linked (GlcNAc...) asparagine glycosylation.

Belongs to the arthropod phospholipase D family. Class II subfamily. It depends on Mg(2+) as a cofactor. Expressed by the venom gland.

It localises to the secreted. It carries out the reaction an N-(acyl)-sphingosylphosphocholine = an N-(acyl)-sphingosyl-1,3-cyclic phosphate + choline. The catalysed reaction is an N-(acyl)-sphingosylphosphoethanolamine = an N-(acyl)-sphingosyl-1,3-cyclic phosphate + ethanolamine. It catalyses the reaction a 1-acyl-sn-glycero-3-phosphocholine = a 1-acyl-sn-glycero-2,3-cyclic phosphate + choline. The enzyme catalyses a 1-acyl-sn-glycero-3-phosphoethanolamine = a 1-acyl-sn-glycero-2,3-cyclic phosphate + ethanolamine. In terms of biological role, dermonecrotic toxins cleave the phosphodiester linkage between the phosphate and headgroup of certain phospholipids (sphingolipid and lysolipid substrates), forming an alcohol (often choline) and a cyclic phosphate. This toxin acts on sphingomyelin (SM). It may also act on ceramide phosphoethanolamine (CPE), lysophosphatidylcholine (LPC) and lysophosphatidylethanolamine (LPE), but not on lysophosphatidylserine (LPS), and lysophosphatidylglycerol (LPG). It acts by transphosphatidylation, releasing exclusively cyclic phosphate products as second products. Induces dermonecrosis, hemolysis, increased vascular permeability, edema, inflammatory response, and platelet aggregation. This is Dermonecrotic toxin LapSicTox-alphaIB1c from Loxosceles apachea (Apache recluse spider).